The chain runs to 215 residues: Large ribosomal subunit protein mL43 (215 aa).

Belongs to the mitochondrion-specific ribosomal protein mL43 family. In terms of assembly, component of the mitochondrial large ribosomal subunit (mt-LSU). Mature mammalian 55S mitochondrial ribosomes consist of a small (28S) and a large (39S) subunit. The 28S small subunit contains a 12S ribosomal RNA (12S mt-rRNA) and 30 different proteins. The 39S large subunit contains a 16S rRNA (16S mt-rRNA), a copy of mitochondrial valine transfer RNA (mt-tRNA(Val)), which plays an integral structural role, and 52 different proteins. High relative levels in skeletal muscle and testis. Lower levels of expression in the heart, brain, placenta, lung, liver, kidney, pancreas, spleen, thymus, prostate, ovary, small intestine, colon and leukocytes. Expression is coregulated with TWNK.

The protein resides in the mitochondrion. This chain is Large ribosomal subunit protein mL43 (MRPL43), found in Homo sapiens (Human).